The following is a 339-amino-acid chain: Serine/threonine-protein kinase pdik1l-A (339 aa).

Residues 8–332 (YDLIREVGRG…LELKLIQIAF (325 aa)) enclose the Protein kinase domain. Residues 14 to 22 (VGRGSYGVV) and K37 contribute to the ATP site. The active-site Proton acceptor is the D164.

This sequence belongs to the protein kinase superfamily. Ser/Thr protein kinase family.

Its subcellular location is the nucleus. The enzyme catalyses L-seryl-[protein] + ATP = O-phospho-L-seryl-[protein] + ADP + H(+). It catalyses the reaction L-threonyl-[protein] + ATP = O-phospho-L-threonyl-[protein] + ADP + H(+). The sequence is that of Serine/threonine-protein kinase pdik1l-A (pdik1-a) from Xenopus laevis (African clawed frog).